Here is a 727-residue protein sequence, read N- to C-terminus: NADH-ubiquinone oxidoreductase 75 kDa subunit, mitochondrial (727 aa).

The transit peptide at 1–23 (MLRIPVRKALVGLSKSPKGCVRT) directs the protein to the mitochondrion. A 2Fe-2S ferredoxin-type domain is found at 30 to 108 (NLIEVFVDGQ…GWNILTNSEK (79 aa)). [2Fe-2S] cluster contacts are provided by Cys-64, Cys-75, and Cys-78. An N6-acetyllysine modification is found at Lys-84. Cys-92 serves as a coordination point for [2Fe-2S] cluster. The 4Fe-4S His(Cys)3-ligated-type domain maps to 108–147 (KSKKAREGVMEFLLANHPLDCPICDQGGECDLQDQSMMFG). His-124, Cys-128, Cys-131, Cys-137, Cys-176, Cys-179, Cys-182, and Cys-226 together coordinate [4Fe-4S] cluster. The 4Fe-4S Mo/W bis-MGD-type domain maps to 245–301 (TRKTESIDVMDAVGSNIVVSTRTGEVMRILPRMHEDINEXWISDKTRFAYDGLKRQR). N6-acetyllysine occurs at positions 467, 499, and 709.

It belongs to the complex I 75 kDa subunit family. Core subunit of respiratory chain NADH dehydrogenase (Complex I) which is composed of 45 different subunits. This is the largest subunit of complex I and it is a component of the iron-sulfur (IP) fragment of the enzyme. Complex I associates with ubiquinol-cytochrome reductase complex (Complex III) to form supercomplexes. Interacts with MDM2 and AKAP1. The cofactor is [2Fe-2S] cluster. Requires [4Fe-4S] cluster as cofactor.

It is found in the mitochondrion inner membrane. It catalyses the reaction a ubiquinone + NADH + 5 H(+)(in) = a ubiquinol + NAD(+) + 4 H(+)(out). Functionally, core subunit of the mitochondrial membrane respiratory chain NADH dehydrogenase (Complex I) which catalyzes electron transfer from NADH through the respiratory chain, using ubiquinone as an electron acceptor. Essential for catalysing the entry and efficient transfer of electrons within complex I. Plays a key role in the assembly and stability of complex I and participates in the association of complex I with ubiquinol-cytochrome reductase complex (Complex III) to form supercomplexes. The sequence is that of NADH-ubiquinone oxidoreductase 75 kDa subunit, mitochondrial (NDUFS1) from Gorilla gorilla gorilla (Western lowland gorilla).